The sequence spans 446 residues: Citrate/sodium symporter (446 aa).

Transmembrane regions (helical) follow at residues 23 to 43 (IFGM…LSHF), 46 to 66 (AIPT…AIFG), 79 to 99 (IGGA…AGIF), 110 to 130 (VMDK…GAIL), and 148 to 168 (ILAG…CFGI). Na(+) contacts are provided by isoleucine 181 and glycine 183. Citrate-binding residues include asparagine 186 and glycine 187. The next 5 helical transmembrane spans lie at 213 to 233 (IAIL…LDMI), 267 to 287 (ETAV…VVAK), 289 to 309 (ILPS…LIVA), 335 to 355 (QLLW…QEII), and 364 to 384 (VIAA…GWLI). Residues methionine 399 and asparagine 401 each contribute to the Na(+) site. 4 residues coordinate citrate: arginine 402, glycine 404, serine 405, and arginine 428. A helical membrane pass occupies residues 425–445 (ISSRLGGGIVLVIASIVFSMM).

It belongs to the 2-hydroxycarboxylate transporter (2-HCT) (TC 2.A.24) family. In terms of assembly, homodimer.

It is found in the cell inner membrane. It carries out the reaction citrate(out) + 2 Na(+)(out) = citrate(in) + 2 Na(+)(in). Functionally, secondary active transporter that catalyzes the uptake of citrate across the membrane with the concomitant uptake of sodium. Is specific for citrate. The chain is Citrate/sodium symporter from Salmonella pullorum.